The following is a 423-amino-acid chain: Growth hormone-releasing hormone receptor (423 aa).

The N-terminal stretch at 1–22 is a signal peptide; that stretch reads MDSGVWAACIFCLLSSLPVALG. At 23-130 the chain is on the extracellular side; sequence HVHPECDFIT…DEKSYFSTVR (108 aa). 3 cysteine pairs are disulfide-bonded: cysteine 41-cysteine 64, cysteine 55-cysteine 96, and cysteine 78-cysteine 112. N-linked (GlcNAc...) asparagine glycosylation occurs at asparagine 50. Residues 131–151 traverse the membrane as a helical segment; that stretch reads IVYTTGHSVSAVALFVAIAIL. Over 152–167 the chain is Cytoplasmic; sequence VALRRLHCPRNYIHSQ. A helical membrane pass occupies residues 168–188; it reads LFATFILKAGAVFLKDAALFH. Residues 189-210 are Extracellular-facing; it reads SENTDHCSFSTVLCKVSVATSH. The chain crosses the membrane as a helical span at residues 211 to 231; the sequence is FATMTNFSWLLAEAVYLTCLL. Residues 232–240 are Cytoplasmic-facing; sequence ASTSPSTRR. A helical transmembrane segment spans residues 241–261; it reads AFWWLVLAGWGLPLLFTGTWV. Over 262–283 the chain is Extracellular; it reads GCKLAFEDVACWDLDDSSPYWW. The chain crosses the membrane as a helical span at residues 284-304; sequence IIKGPIVLSVGVNFGLFLNII. The Cytoplasmic segment spans residues 305-331; it reads RILLRKLEPAQGSLHTQPQYWRLSKST. A helical transmembrane segment spans residues 332–352; it reads LLLIPLFGIHYVIFNFLPDSA. Residues 353 to 357 lie on the Extracellular side of the membrane; the sequence is GLGIR. Residues 358 to 378 traverse the membrane as a helical segment; the sequence is LPLELGLGSFQGFIVAILYCF. The Cytoplasmic portion of the chain corresponds to 379 to 423; sequence LNQEVRTEISRRWHGHDPELLPAWRTHAKWAKPSRSRAKVLTTVC.

This sequence belongs to the G-protein coupled receptor 2 family. As to expression, pituitary gland. Also detected in the lymphocytes and thymocytes.

The protein resides in the cell membrane. Functionally, receptor for GRF, coupled to G proteins which activate adenylyl cyclase. Stimulates somatotroph cell growth, growth hormone gene transcription and growth hormone secretion. The protein is Growth hormone-releasing hormone receptor (GHRHR) of Sus scrofa (Pig).